The primary structure comprises 1742 residues: NACHT and WD repeat domain-containing protein 2 (1742 aa).

5 LRR repeats span residues 386–410 (FYEY…GHIN), 677–698 (LEDV…TRPS), 724–747 (VKNV…LYLQ), 883–906 (YSQE…VTAF), and 925–953 (LPKL…SSMD). The NACHT domain occupies 410–737 (NPLIIYGGPC…TLLVWANRHL (328 aa)). WD repeat units lie at residues 963-1004 (LSSS…LLRQ), 1007-1046 (TAQS…LLSE), 1140-1179 (FSGG…SPQL), 1229-1271 (KHNE…ASLQ), 1272-1311 (EISG…AMSN), 1314-1353 (KTGK…IEAV), 1355-1394 (KHEG…NLFR), 1396-1434 (NGQR…RVCN), 1476-1516 (EDGT…ICRR), 1522-1564 (NFLK…VHAS), and 1614-1653 (SLYK…DAAL).

In Homo sapiens (Human), this protein is NACHT and WD repeat domain-containing protein 2 (NWD2).